The sequence spans 406 residues: Argininosuccinate synthase (406 aa).

Residues 10–18 (AYSGGLDTS) and Ala37 contribute to the ATP site. Positions 88 and 93 each coordinate L-citrulline. Gly118 lines the ATP pocket. The L-aspartate site is built by Thr120, Asn124, and Asp125. Asn124 provides a ligand contact to L-citrulline. 5 residues coordinate L-citrulline: Arg128, Ser179, Ser188, Glu264, and Tyr276.

Belongs to the argininosuccinate synthase family. Type 1 subfamily. In terms of assembly, homotetramer.

It localises to the cytoplasm. The enzyme catalyses L-citrulline + L-aspartate + ATP = 2-(N(omega)-L-arginino)succinate + AMP + diphosphate + H(+). It functions in the pathway amino-acid biosynthesis; L-arginine biosynthesis; L-arginine from L-ornithine and carbamoyl phosphate: step 2/3. The sequence is that of Argininosuccinate synthase from Roseobacter denitrificans (strain ATCC 33942 / OCh 114) (Erythrobacter sp. (strain OCh 114)).